The following is a 195-amino-acid chain: Pyruvoyl-dependent arginine decarboxylase AaxB (195 aa).

At serine 53 the chain carries Pyruvic acid (Ser).

It belongs to the pyruvoyl-dependent arginine decarboxylase family. As to quaternary structure, trimer of an alpha-beta dimer. Pyruvate is required as a cofactor.

It is found in the cytoplasm. It catalyses the reaction L-arginine + H(+) = agmatine + CO2. Its function is as follows. Part of the AaxABC system, catalyzes the decarboxylation of L-arginine. The arginine uptake by the bacterium in the macrophage may be a virulence factor against the host innate immune response. The sequence is that of Pyruvoyl-dependent arginine decarboxylase AaxB (aaxB) from Chlamydia trachomatis serovar D (strain ATCC VR-885 / DSM 19411 / UW-3/Cx).